The following is a 240-amino-acid chain: Ribosomal RNA small subunit methyltransferase G (240 aa).

Residues Gly-78, Phe-83, 129–130 (AE), and Arg-147 each bind S-adenosyl-L-methionine. Residues 218-240 (RRQTSKKYPRKPGTPNKSPLLEN) are disordered.

Belongs to the methyltransferase superfamily. RNA methyltransferase RsmG family.

Its subcellular location is the cytoplasm. In terms of biological role, specifically methylates the N7 position of guanine in position 535 of 16S rRNA. The polypeptide is Ribosomal RNA small subunit methyltransferase G (Staphylococcus haemolyticus (strain JCSC1435)).